The sequence spans 496 residues: Ribose import ATP-binding protein RbsA (496 aa).

ABC transporter domains lie at 5–242 (IEMK…VGRS) and 252–496 (SQIG…TGGE). ATP is bound at residue 37 to 44 (GENGAGKS).

Belongs to the ABC transporter superfamily. Ribose importer (TC 3.A.1.2.1) family. The complex is composed of an ATP-binding protein (RbsA), two transmembrane proteins (RbsC) and a solute-binding protein (RbsB).

The protein localises to the cell membrane. It catalyses the reaction D-ribose(out) + ATP + H2O = D-ribose(in) + ADP + phosphate + H(+). In terms of biological role, part of the ABC transporter complex RbsABC involved in ribose import. Responsible for energy coupling to the transport system. This chain is Ribose import ATP-binding protein RbsA, found in Bacillus cereus (strain ATCC 14579 / DSM 31 / CCUG 7414 / JCM 2152 / NBRC 15305 / NCIMB 9373 / NCTC 2599 / NRRL B-3711).